We begin with the raw amino-acid sequence, 60 residues long: Large ribosomal subunit protein uL30 (60 aa).

This sequence belongs to the universal ribosomal protein uL30 family. Part of the 50S ribosomal subunit.

This is Large ribosomal subunit protein uL30 from Bacillus pumilus (strain SAFR-032).